The chain runs to 102 residues: Acid shock protein (102 aa).

The first 21 residues, M1 to A21, serve as a signal peptide directing secretion. The propeptide occupies A22–Q58. Positions I26 to K41 are enriched in low complexity. The tract at residues I26–A102 is disordered. The segment covering A80–H90 has biased composition (basic residues). The segment covering Q91–A102 has biased composition (low complexity).

Belongs to the Asr family. Proteolytic processing gives rise to the active protein.

The protein localises to the periplasm. In terms of biological role, required for growth and/or survival at acidic conditions. In Escherichia coli O81 (strain ED1a), this protein is Acid shock protein.